A 78-amino-acid chain; its full sequence is Large ribosomal subunit protein bL28 (78 aa).

It belongs to the bacterial ribosomal protein bL28 family.

This Acaryochloris marina (strain MBIC 11017) protein is Large ribosomal subunit protein bL28.